The sequence spans 3564 residues: CUB and sushi domain-containing protein 1 (3564 aa).

The signal sequence occupies residues 1–26; it reads MTAWRRFQSLLLLLGLLVLCARLLTA. Over 27–3487 the chain is Extracellular; the sequence is AKGQNCGGLV…SHYHGTSSGS (3461 aa). 10 disulfides stabilise this stretch: Cys-32–Cys-58, Cys-145–Cys-185, Cys-171–Cys-202, Cys-208–Cys-234, Cys-349–Cys-389, Cys-375–Cys-406, Cys-411–Cys-437, Cys-527–Cys-567, Cys-553–Cys-580, and Cys-584–Cys-610. Residues 32 to 140 form the CUB 1 domain; the sequence is CGGLVQGPNG…QGFKALYEVL (109 aa). N-linked (GlcNAc...) asparagine glycans are attached at residues Asn-40 and Asn-57. Residues 143-204 form the Sushi 1 domain; it reads HTCGNPGEIL…WDFPAPFCRA (62 aa). Residues 208-312 form the CUB 2 domain; the sequence is CGGTLRGTSS…KGFNAQFQVK (105 aa). The 62-residue stretch at 347-408 folds into the Sushi 2 domain; sequence DMCPDPGIPE…WSDHRPICRA (62 aa). The region spanning 411 to 522 is the CUB 3 domain; the sequence is CGSNLRGPSG…PGFKAVYQEI (112 aa). The Sushi 3 domain maps to 525–582; that stretch reads GGCGDPGIPAYGKRTGSSFLHGDTLTFECPAAFELVGERVITCQQNNQWSGNKPSCVF. In terms of domain architecture, CUB 4 spans 584 to 692; that stretch reads CFFNFTASSG…RGFNITYTTF (109 aa). Asn-587 and Asn-686 each carry an N-linked (GlcNAc...) asparagine glycan. The 62-residue stretch at 695 to 756 folds into the Sushi 4 domain; the sequence is NECHDPGIPI…WSSTVPRCEA (62 aa). Disulfide bonds link Cys-697/Cys-738, Cys-723/Cys-754, Cys-758/Cys-784, Cys-873/Cys-913, Cys-899/Cys-926, and Cys-930/Cys-956. One can recognise a CUB 5 domain in the interval 758 to 866; sequence CGGHLTASSG…IGFLIHYESV (109 aa). The Sushi 5 domain occupies 871–928; sequence DSCLDPGIPVNGHRHGGDFGIRSTVTFSCDPGYTLSDDEPLVCERNHQWNHALPSCDA. One can recognise a CUB 6 domain in the interval 930 to 1040; sequence CGGYIQGKSG…EGFNITFSEY (111 aa). Residues Asn-955, Asn-1015, and Asn-1034 are each glycosylated (N-linked (GlcNAc...) asparagine). The Sushi 6 domain maps to 1043–1102; the sequence is EPCDDPGVPAFSRRIGFHFGVGDSLTFSCFLGYRLEGATKLTCLGGGRRVWSAPLPRCVA. Intrachain disulfides connect Cys-1045–Cys-1085, Cys-1071–Cys-1100, and Cys-1104–Cys-1130. The 109-residue stretch at 1104–1212 folds into the CUB 7 domain; that stretch reads CGASVKGNEG…QGFQLTYTSF (109 aa). Asn-1184 and Asn-1197 each carry an N-linked (GlcNAc...) asparagine glycan. A Sushi 7 domain is found at 1215-1275; the sequence is VKCEDPGIPN…WDKPLPSCIA (61 aa). 12 cysteine pairs are disulfide-bonded: Cys-1217–Cys-1258, Cys-1244–Cys-1273, Cys-1277–Cys-1304, Cys-1391–Cys-1431, Cys-1417–Cys-1447, Cys-1451–Cys-1477, Cys-1564–Cys-1604, Cys-1590–Cys-1621, Cys-1625–Cys-1651, Cys-1741–Cys-1781, Cys-1767–Cys-1798, and Cys-1802–Cys-1828. The region spanning 1277–1386 is the CUB 8 domain; that stretch reads CGGQIHAATS…SGFSIQFSTS (110 aa). Residues 1389-1449 form the Sushi 8 domain; sequence ATCNDPGMPQ…WQPDPPTCIA (61 aa). An N-linked (GlcNAc...) asparagine glycan is attached at Asn-1399. In terms of domain architecture, CUB 9 spans 1451–1559; it reads CGGNLTGPAG…SGFAIEFKEK (109 aa). Asn-1454 and Asn-1572 each carry an N-linked (GlcNAc...) asparagine glycan. The Sushi 9 domain occupies 1562-1623; that stretch reads EACFDPGNIM…WDQVLPSCNA (62 aa). The CUB 10 domain maps to 1625-1733; sequence CGGQYTGSEG…RGFHFVYQAV (109 aa). Asn-1644 carries an N-linked (GlcNAc...) asparagine glycan. Residues 1739–1800 enclose the Sushi 10 domain; it reads TQCSSVPEPR…WNDTIPSCVV (62 aa). N-linked (GlcNAc...) asparagine glycans are attached at residues Asn-1792, Asn-1805, and Asn-1882. The CUB 11 domain maps to 1802–1910; it reads CSGNFTQRRG…AGFHLEYKTV (109 aa). Positions 1913–1972 constitute a Sushi 11 domain; that stretch reads AACQEPALPSNSIKIGDRYMVNDVLSFQCEPGYTLQGRSHISCMPGTVRRWNYPSPLCIA. Intrachain disulfides connect Cys-1915-Cys-1955, Cys-1941-Cys-1970, and Cys-1974-Cys-2000. Residues 1974 to 2082 enclose the CUB 12 domain; that stretch reads CGGTLSTLGG…QGFKLAYQAY (109 aa). The N-linked (GlcNAc...) asparagine glycan is linked to Asn-2018. A Sushi 12 domain is found at 2085-2144; that stretch reads QNCPDPPPFQNGYMINSDYSVGQSVSFECYPGYILIGHPVLTCQHGINRNWNYPFPRCDA. Intrachain disulfides connect Cys-2087–Cys-2127, Cys-2113–Cys-2142, and Cys-2146–Cys-2172. Positions 2146–2257 constitute a CUB 13 domain; that stretch reads CGYNVTSQNG…LNFHAFQLKK (112 aa). N-linked (GlcNAc...) asparagine glycans are attached at residues Asn-2149, Asn-2154, and Asn-2187. Positions 2256–2317 constitute a Sushi 13 domain; sequence KKCQPPPAVP…FEGSLPTCEA (62 aa). Disulfide bonds link Cys-2258–Cys-2300, Cys-2286–Cys-2315, and Cys-2319–Cys-2347. A CUB 14 domain is found at 2319 to 2430; that stretch reads CPANEVRTGS…KGFKIRYAAP (112 aa). N-linked (GlcNAc...) asparagine glycans are attached at residues Asn-2358, Asn-2394, Asn-2400, Asn-2445, Asn-2470, and Asn-2503. 15 consecutive Sushi domains span residues 2430–2492, 2493–2554, 2555–2619, 2620–2677, 2678–2735, 2736–2793, 2794–2856, 2857–2914, 2918–2975, 2976–3034, 3035–3094, 3095–3152, 3153–3210, 3214–3272, and 3273–3332; these read PYCS…LCQA, VSCG…TCKP, VACP…SCRV, ISCG…RCLA, GHCG…VCVP, ITCG…TCRV, VNCS…KCLA, ISCG…HCTG, GFCG…VCEA, VSCG…DCTI, ISCG…VCKA, VLCP…QCLP, VFCG…TCID, NTCP…ECIP, and HACR…VCKS. Cystine bridges form between Cys-2432-Cys-2473, Cys-2459-Cys-2490, Cys-2495-Cys-2537, Cys-2521-Cys-2552, Cys-2557-Cys-2602, Cys-2588-Cys-2617, Cys-2622-Cys-2662, Cys-2648-Cys-2675, Cys-2680-Cys-2720, Cys-2706-Cys-2733, Cys-2738-Cys-2778, and Cys-2764-Cys-2791. Asn-2605 carries N-linked (GlcNAc...) asparagine glycosylation. 2 N-linked (GlcNAc...) asparagine glycosylation sites follow: Asn-2750 and Asn-2761. Asn-2795 is a glycosylation site (N-linked (GlcNAc...) asparagine). Disulfide bonds link Cys-2796–Cys-2841, Cys-2827–Cys-2854, Cys-2859–Cys-2899, Cys-2885–Cys-2912, Cys-2920–Cys-2960, Cys-2946–Cys-2973, Cys-2978–Cys-3019, Cys-3005–Cys-3032, Cys-3037–Cys-3079, Cys-3063–Cys-3092, Cys-3097–Cys-3137, Cys-3123–Cys-3150, Cys-3155–Cys-3195, Cys-3181–Cys-3208, Cys-3216–Cys-3257, Cys-3243–Cys-3270, Cys-3275–Cys-3317, and Cys-3302–Cys-3330. An N-linked (GlcNAc...) asparagine glycan is attached at Asn-2894. Asn-2963 is a glycosylation site (N-linked (GlcNAc...) asparagine). Residues Asn-3022 and Asn-3056 are each glycosylated (N-linked (GlcNAc...) asparagine). Asn-3105 is a glycosylation site (N-linked (GlcNAc...) asparagine). Asn-3228 and Asn-3260 each carry an N-linked (GlcNAc...) asparagine glycan. Asn-3339, Asn-3379, and Asn-3386 each carry an N-linked (GlcNAc...) asparagine glycan. Residues 3488–3508 form a helical membrane-spanning segment; that stretch reads VAAAILVPFFALILSGFAFYL. Over 3509–3564 the chain is Cytoplasmic; that stretch reads YKHRTRPKVQYNGYAGHENSNGQASFENPMYDTNLKPTEAKAVRFDTTLNTVCTVV.

The protein belongs to the CSMD family. Weakly expressed in most tissues, except in brain. Expressed at intermediate level in brain, including cerebellum, substantia nigra, hippocampus and fetal brain.

It localises to the membrane. In terms of biological role, potential suppressor of squamous cell carcinomas. The sequence is that of CUB and sushi domain-containing protein 1 (CSMD1) from Homo sapiens (Human).